The following is a 220-amino-acid chain: Probable nicotinate-nucleotide adenylyltransferase (220 aa).

This sequence belongs to the NadD family.

It catalyses the reaction nicotinate beta-D-ribonucleotide + ATP + H(+) = deamido-NAD(+) + diphosphate. It functions in the pathway cofactor biosynthesis; NAD(+) biosynthesis; deamido-NAD(+) from nicotinate D-ribonucleotide: step 1/1. In terms of biological role, catalyzes the reversible adenylation of nicotinate mononucleotide (NaMN) to nicotinic acid adenine dinucleotide (NaAD). This is Probable nicotinate-nucleotide adenylyltransferase from Saccharophagus degradans (strain 2-40 / ATCC 43961 / DSM 17024).